Here is a 366-residue protein sequence, read N- to C-terminus: Histidinol-phosphate aminotransferase 1 (366 aa).

At Lys226 the chain carries N6-(pyridoxal phosphate)lysine.

The protein belongs to the class-II pyridoxal-phosphate-dependent aminotransferase family. Histidinol-phosphate aminotransferase subfamily. In terms of assembly, homodimer. Pyridoxal 5'-phosphate is required as a cofactor.

It carries out the reaction L-histidinol phosphate + 2-oxoglutarate = 3-(imidazol-4-yl)-2-oxopropyl phosphate + L-glutamate. It functions in the pathway amino-acid biosynthesis; L-histidine biosynthesis; L-histidine from 5-phospho-alpha-D-ribose 1-diphosphate: step 7/9. This Mannheimia succiniciproducens (strain KCTC 0769BP / MBEL55E) protein is Histidinol-phosphate aminotransferase 1.